A 100-amino-acid polypeptide reads, in one-letter code: MTPWFLYLIRTADNKLYTGITTDVERRYQQHQSGKGAKALRGKGELTLAFSAPVGDRSLALRAEYRVKQLTKRQKERLVAEGSGFAELISSLQTPEIKSD.

The region spanning 2-77 (TPWFLYLIRT…KQLTKRQKER (76 aa)) is the GIY-YIG domain.

It belongs to the UPF0213 family.

The chain is UPF0213 protein YhbQ from Escherichia fergusonii (strain ATCC 35469 / DSM 13698 / CCUG 18766 / IAM 14443 / JCM 21226 / LMG 7866 / NBRC 102419 / NCTC 12128 / CDC 0568-73).